The sequence spans 407 residues: Biotin synthase (407 aa).

In terms of domain architecture, Radical SAM core spans 47-277; sequence WFGRRVKLNY…DVEVRIAGGR (231 aa). [4Fe-4S] cluster contacts are provided by C65, C69, and C72. The [2Fe-2S] cluster site is built by C109, C142, C202, and R272. The segment at 368 to 407 is disordered; sequence GGGVCAPAPAATTPRPAEEPRTDLVAVRRRGAGTDLAPNA. Over residues 373 to 382 the composition is skewed to low complexity; it reads APAPAATTPR.

It belongs to the radical SAM superfamily. Biotin synthase family. As to quaternary structure, homodimer. Requires [4Fe-4S] cluster as cofactor. The cofactor is [2Fe-2S] cluster.

It catalyses the reaction (4R,5S)-dethiobiotin + (sulfur carrier)-SH + 2 reduced [2Fe-2S]-[ferredoxin] + 2 S-adenosyl-L-methionine = (sulfur carrier)-H + biotin + 2 5'-deoxyadenosine + 2 L-methionine + 2 oxidized [2Fe-2S]-[ferredoxin]. The protein operates within cofactor biosynthesis; biotin biosynthesis; biotin from 7,8-diaminononanoate: step 2/2. Functionally, catalyzes the conversion of dethiobiotin (DTB) to biotin by the insertion of a sulfur atom into dethiobiotin via a radical-based mechanism. The chain is Biotin synthase from Streptomyces coelicolor (strain ATCC BAA-471 / A3(2) / M145).